The chain runs to 198 residues: ATP-dependent Clp protease proteolytic subunit 2 (198 aa).

The active-site Nucleophile is the S94. The active site involves H119.

Belongs to the peptidase S14 family. In terms of assembly, fourteen ClpP subunits assemble into 2 heptameric rings which stack back to back to give a disk-like structure with a central cavity, resembling the structure of eukaryotic proteasomes.

The protein resides in the cytoplasm. The catalysed reaction is Hydrolysis of proteins to small peptides in the presence of ATP and magnesium. alpha-casein is the usual test substrate. In the absence of ATP, only oligopeptides shorter than five residues are hydrolyzed (such as succinyl-Leu-Tyr-|-NHMec, and Leu-Tyr-Leu-|-Tyr-Trp, in which cleavage of the -Tyr-|-Leu- and -Tyr-|-Trp bonds also occurs).. Functionally, cleaves peptides in various proteins in a process that requires ATP hydrolysis. Has a chymotrypsin-like activity. Plays a major role in the degradation of misfolded proteins. The protein is ATP-dependent Clp protease proteolytic subunit 2 of Borreliella burgdorferi (strain ATCC 35210 / DSM 4680 / CIP 102532 / B31) (Borrelia burgdorferi).